Here is a 325-residue protein sequence, read N- to C-terminus: DNA-directed RNA polymerase subunit alpha (325 aa).

The interval 1-231 (MQTSLLKPKI…DQLSVFAALE (231 aa)) is alpha N-terminal domain (alpha-NTD). An alpha C-terminal domain (alpha-CTD) region spans residues 246-325 (IDPILLRPVD…ENWPPAGLDK (80 aa)).

This sequence belongs to the RNA polymerase alpha chain family. Homodimer. The RNAP catalytic core consists of 2 alpha, 1 beta, 1 beta' and 1 omega subunit. When a sigma factor is associated with the core the holoenzyme is formed, which can initiate transcription.

The enzyme catalyses RNA(n) + a ribonucleoside 5'-triphosphate = RNA(n+1) + diphosphate. Functionally, DNA-dependent RNA polymerase catalyzes the transcription of DNA into RNA using the four ribonucleoside triphosphates as substrates. This Paraburkholderia phymatum (strain DSM 17167 / CIP 108236 / LMG 21445 / STM815) (Burkholderia phymatum) protein is DNA-directed RNA polymerase subunit alpha.